A 267-amino-acid polypeptide reads, in one-letter code: Phosphatidylcholine synthase (267 aa).

Topologically, residues 1–42 (MILWRIVRPGAAMAYVQTGLVLIAEAMDTQQDSLKPRPAMRA) are cytoplasmic. A helical membrane pass occupies residues 43-63 (AAFSVHVFTAFGAAIALLAML). Residues 64-69 (EAVREH) lie on the Periplasmic side of the membrane. The helical transmembrane segment at 70-90 (WAAMFQWLGVALIIDAIDGPI) threads the bilayer. Over 91-102 (ARRLDVKNVQPN) the chain is Cytoplasmic. A helical membrane pass occupies residues 103–123 (WSGDVLDLVVDFVTYVFVPAY). A topological domain (periplasmic) is located at residue A124. The chain crosses the membrane as a helical span at residues 125 to 145 (IVASGLLLPVAAPLLGVAIIV). Residues 146–162 (TSALYFADLRMKADDNH) are Cytoplasmic-facing. The helical transmembrane segment at 163-183 (FRGFPALWNAAAFYLFLLHWP) threads the bilayer. Position 184 (P184) is a topological domain, periplasmic. The chain crosses the membrane as a helical span at residues 185-205 (LWSTLLVAALVVLTFVPFHVL). Over 206–215 (HPVRVVRLRW) the chain is Cytoplasmic. A helical transmembrane segment spans residues 216–236 (LTMSLIGIWAVLSLYTLDMDF). Residues 237-239 (RVG) lie on the Periplasmic side of the membrane. The chain crosses the membrane as a helical span at residues 240–260 (PGVTLALCAIALWISFSDALI). Residues 261–267 (RFARSFA) are Cytoplasmic-facing.

The protein belongs to the CDP-alcohol phosphatidyltransferase class-I family. The cofactor is Mn(2+).

It localises to the cell inner membrane. The catalysed reaction is a CDP-1,2-diacyl-sn-glycerol + choline = a 1,2-diacyl-sn-glycero-3-phosphocholine + CMP + H(+). In terms of biological role, condenses choline with CDP-diglyceride to produce phosphatidylcholine and CMP. The polypeptide is Phosphatidylcholine synthase (Bradyrhizobium diazoefficiens (strain JCM 10833 / BCRC 13528 / IAM 13628 / NBRC 14792 / USDA 110)).